Here is a 323-residue protein sequence, read N- to C-terminus: Fructose-1,6-bisphosphatase class 1 (323 aa).

Mg(2+) is bound by residues Glu84, Asp103, Leu105, and Asp106. Residues 106-109 (DGSS), Asn198, and Lys264 each bind substrate. Glu270 lines the Mg(2+) pocket.

Belongs to the FBPase class 1 family. Homotetramer. Mg(2+) serves as cofactor.

It localises to the cytoplasm. It catalyses the reaction beta-D-fructose 1,6-bisphosphate + H2O = beta-D-fructose 6-phosphate + phosphate. It functions in the pathway carbohydrate biosynthesis; gluconeogenesis. This Pseudoalteromonas atlantica (strain T6c / ATCC BAA-1087) protein is Fructose-1,6-bisphosphatase class 1.